Here is a 917-residue protein sequence, read N- to C-terminus: Low-density lipoprotein receptor-related protein 8 (917 aa).

Positions 1–24 are cleaved as a signal peptide; the sequence is MCRPALARLLLLQLLLLKLYLGKG. The Extracellular portion of the chain corresponds to 25–838; sequence AMKECDKDQF…GQGFDSTVTA (814 aa). LDL-receptor class A domains follow at residues 28-64, 67-105, 108-146, 148-184, and 187-225; these read ECDKDQFQCRNERCIPAVWACDEDNDCSDNSDEADCP, TCAETDFACDNGHCIPDRWKCDGEEECSDGSDESEAACT, VCPAEKISCGDLSNKCIPSSWRCDGQKDCESGIDEAGCA, ACSPDEFQCSNKTCISINFVCDGYNNCGDGSDEKKCS, and TCSPNEFQCNNSVCIPQLWVCDNQADCEDHSDESIERCG. Disulfide bonds link Cys-29–Cys-41, Cys-36–Cys-54, Cys-48–Cys-63, Cys-68–Cys-80, Cys-75–Cys-93, Cys-87–Cys-104, Cys-109–Cys-123, Cys-116–Cys-136, Cys-130–Cys-145, Cys-149–Cys-161, Cys-156–Cys-174, Cys-168–Cys-183, Cys-188–Cys-200, Cys-195–Cys-213, Cys-207–Cys-224, Cys-241–Cys-259, Cys-253–Cys-268, Cys-273–Cys-285, Cys-280–Cys-298, Cys-292–Cys-307, Cys-313–Cys-326, Cys-321–Cys-339, Cys-333–Cys-350, Cys-355–Cys-366, Cys-362–Cys-375, Cys-377–Cys-389, Cys-395–Cys-405, Cys-401–Cys-414, and Cys-416–Cys-429. The Ca(2+) site is built by Trp-46, Asp-49, Asp-51, Asp-53, Asp-59, and Glu-60. Asn-158 carries an N-linked (GlcNAc...) asparagine glycan. N-linked (GlcNAc...) asparagine glycosylation is present at Asn-196. 2 LDL-receptor class A domains span residues 272–308 and 312–351; these read TCRPDEFQCGDGTCIHGAKQCDKVHDCPDNSDEAGCV and ACESPSKFQCKSGECIDGGKVCDLHRDCRDWSDEPLKECG. The region spanning 346–390 is the EGF-like 1 domain; it reads PLKECGINECSLNNGGCSHICKDLKIGYECECPPGYKLLDKKTCG. One can recognise an EGF-like 2; calcium-binding domain in the interval 391 to 430; it reads DIDECENPDACSQICINYKGDYKCECYEGYEMDTLSKNCK. 5 LDL-receptor class B repeats span residues 476-522, 523-565, 566-609, 610-652, and 653-695; these read NRIY…DWVH, KNIY…DPTR, RFMY…DLLN, QRLY…AVFE, and DRVF…FHEL. N-linked (GlcNAc...) asparagine glycosylation is present at Asn-532. N-linked (GlcNAc...) asparagine glycosylation is present at Asn-628. Positions 754 to 813 are clustered O-linked oligosaccharides; it reads TTPATVEVPTTTTSHPAATSTVTVTGSANTTTAVIPRAVSEATTAIPSSHSTTSLLIDSE. N-linked (GlcNAc...) asparagine glycosylation is found at Asn-782 and Asn-820. A helical transmembrane segment spans residues 839–861; the sequence is AVIGIVIPVVVIGLLCMGGYLIW. The Cytoplasmic portion of the chain corresponds to 862 to 917; the sequence is RNWKRKNTKSMNFDNPVYRKTTEEEDEDEIHIGRTAQIGHVYPARVALSLEDDGLP.

It belongs to the LDLR family. As to quaternary structure, homooligomer. As to expression, mainly in brain.

It is found in the cell membrane. Functionally, cell surface receptor for Reelin (RELN) and apolipoprotein E (apoE)-containing ligands. Also binds alpha2-macroglobulin. LRP8 participates in transmitting the extracellular Reelin signal to intracellular signaling processes, by binding to DAB1 on its cytoplasmic tail. Reelin acts via both the VLDL receptor (VLDLR) and LRP8 to regulate DAB1 tyrosine phosphorylation and microtubule function in neurons. LRP8 has higher affinity for Reelin than VLDLR. LRP8 is thus a key component of the Reelin pathway which governs neuronal layering of the forebrain during embryonic brain development. Not required for endocytic uptake of SEPP1 in the kidney which is mediated by LRP2. The sequence is that of Low-density lipoprotein receptor-related protein 8 (LRP8) from Gallus gallus (Chicken).